The chain runs to 1217 residues: MATLYVSPHLDDFRSLLALVAAEYCGNAKQQSQVWQWLSFADNELTPVSCAVVFPLMGMTGLDKKIQQNSRVELMRVLKVLDQALEPRTFLVGESITLADMAVAMAVLLPFKYVLEPSDRNVLMNVTRWFTTCINQPEFLKVLGKISLCEKMVPVTAKTSTEEAAAVHPDAAALNGPPKTEAQLKKEAKKREKLEKFQQKKEMEAKKKMQPVAEKKAKPEKRELGVITYDIPTPSGEKKDVVSPLPDSYSPQYVEAAWYPWWEKQGFFKPEFGRKSIGEQNPRGIFMMCIPPPNVTGSLHLGHALTNAIQDTLTRWHRMRGETTLWNPGCDHAGIATQVVVEKKLMREKGTSRHDLGREKFIEEVWKWKNEKGDRIYHQLKKLGSSLDWDRACFTMDPKLSYAVQEAFIRMHDEGVIYRSKRLVNWSCSLNSAISDIEVDKNELSGRTLLPVPGYKEKVEFGVLVSFAYKVDGSDEEVVVATTRIETMLGDTAVAVHPSDSRYQHLKGKTVLHPFCDRKIPVVFDDFVDMSFGTGAVKITPAHDHNDYEVGVRHNLAFINILDENGFVINVPPPFLGMKRFDARKAVLQALKDRDQFKEIKDNPMVVPVCSRSKDIVEPLMKPQWYVSCSDMGKQAADAVREGRLKIIPDHHSQTWFNWMDNIRDWCISRQLWWGHRIPAYFITVSDPSVKPGEDMDGHYRVSGRTPEEAREKAAKRFNVSPDKIALRQDEDVLDTWFSSGINPFSILGWPNETEDLNVFYPGTLLETGHDILFFWVARMVMMGLKLTGKLPFKEVYHCAVVRDAHGRKMSKSLGNVIDPLDDHIGIALEGLHAQLMDTNLDPLEVEKPKKVQKADYPNCIPECGTDALRFALCAYTSQGRDINLDVNRILGYRHFCNKLWNAVKFAMRTLGDQFVPADTSPAEREESVSDRWILSRLSTAVAQCDAAFRTYDFPAITTAIYNFWLYELCDVYLESVKPVFIKAKEDGSCERPAAVCRQTLYTCLEVGLRLLAPLMPFVTEELYQRLPRRRPQSDPPSICVTPYPDAAEFCWQCEDVDRDIDFIMGVVRTIRSLRSDYKLTKTAADCYLQCTDAATVSLVQKYSLQIQTLSYSQAIVPLMAPQPAPEGCAVAIASDRCTVNMMLKGLIDVEKEVPKLMGKKTDLEKQIEKLSEKISKGDYKEKVPVKVQEQDTEKLRQSQTELEKVKEAMDNFQKMM.

In terms of domain architecture, GST C-terminal spans 27-155 (NAKQQSQVWQ…ISLCEKMVPV (129 aa)). Residues 293 to 303 (PNVTGSLHLGH) carry the 'HIGH' region motif. Residues 809 to 813 (KMSKS) carry the 'KMSKS' region motif. Lys-812 contributes to the ATP binding site.

The protein belongs to the class-I aminoacyl-tRNA synthetase family.

It carries out the reaction tRNA(Val) + L-valine + ATP = L-valyl-tRNA(Val) + AMP + diphosphate. In Takifugu rubripes (Japanese pufferfish), this protein is Valine--tRNA ligase (vars1).